Here is a 127-residue protein sequence, read N- to C-terminus: MSRLFRRLSTLLLCSLLVLGVWLTQPLSVQAAEIRNKVDDKIAETAGKVDLNNASVRRFQQYPGMYPTLAGKIVVGGPYDQVEDVLKLDLTERQKELFEKYKENFTVTDPEIALNEGFDRINDGQYR.

The signal sequence occupies residues 1–31 (MSRLFRRLSTLLLCSLLVLGVWLTQPLSVQA).

This sequence belongs to the PsbU family. In terms of assembly, PSII is composed of 1 copy each of membrane proteins PsbA, PsbB, PsbC, PsbD, PsbE, PsbF, PsbH, PsbI, PsbJ, PsbK, PsbL, PsbM, PsbT, PsbX, PsbY, PsbZ, Psb30/Ycf12, peripheral proteins PsbO, CyanoQ (PsbQ), PsbU, PsbV and a large number of cofactors. It forms dimeric complexes.

It is found in the cellular thylakoid membrane. Functionally, one of the extrinsic, lumenal subunits of photosystem II (PSII). PSII is a light-driven water plastoquinone oxidoreductase, using light energy to abstract electrons from H(2)O, generating a proton gradient subsequently used for ATP formation. The extrinsic proteins stabilize the structure of photosystem II oxygen-evolving complex (OEC), the ion environment of oxygen evolution and protect the OEC against heat-induced inactivation. This chain is Photosystem II extrinsic protein U, found in Synechococcus sp. (strain RCC307).